We begin with the raw amino-acid sequence, 540 residues long: Amino acid transporter AVT1B (540 aa).

The segment covering 1–11 (MNHSTSDQSLY) has biased composition (polar residues). Residues 1-55 (MNHSTSDQSLYIESDDGDDERKHLSDDEDDDGTLSDTSDAYNQNQHHLSKASPYS) form a disordered region. The next 11 membrane-spanning stretches (helical) occupy residues 155 to 175 (AVLNGVNVLCGVGILSTPYAV), 180 to 200 (WLGLIILFAFGILCFYTGLLL), 227 to 247 (ILVSVILYMELYAMSVEYIIL), 273 to 293 (LFALLTTLAVLPTVWLRDLSV), 297 to 317 (ISAGGVIASVLVVLCLFWVGL), 332 to 352 (LATLPVSVGLYGYCYSGHGVF), 367 to 387 (AVLLASFGICTLMYAGVAVMG), 412 to 432 (IALWTTVVNPFTKYALTLSPV), 452 to 474 (IAIRSALAISTLLVGLAIPFFGL), 478 to 500 (LIGSFLTMLITLILPPACFLSIL), and 511 to 531 (ICILIMTVGAVCSVIGTYSAL).

It belongs to the amino acid/polyamine transporter 2 family. Amino acid/auxin permease (AAAP) (TC 2.A.18.5) subfamily.

It localises to the membrane. This chain is Amino acid transporter AVT1B, found in Arabidopsis thaliana (Mouse-ear cress).